A 539-amino-acid chain; its full sequence is Eukaryotic translation initiation factor 3 subunit L (539 aa).

The 209-residue stretch at 306-514 (TFSDILLYIQ…IHIADTKVSH (209 aa)) folds into the PCI domain.

The protein belongs to the eIF-3 subunit L family. As to quaternary structure, component of the eukaryotic translation initiation factor 3 (eIF-3) complex. The eIF-3 complex interacts with pix.

It is found in the cytoplasm. Component of the eukaryotic translation initiation factor 3 (eIF-3) complex, which is involved in protein synthesis of a specialized repertoire of mRNAs and, together with other initiation factors, stimulates binding of mRNA and methionyl-tRNAi to the 40S ribosome. The eIF-3 complex specifically targets and initiates translation of a subset of mRNAs involved in cell proliferation. This Drosophila melanogaster (Fruit fly) protein is Eukaryotic translation initiation factor 3 subunit L.